The sequence spans 380 residues: Tomoregulin-1 (380 aa).

An N-terminal signal peptide occupies residues 1–39 (MGAAAAEAPLRLPAAPPLAFCCYTSVLLLFAFSLPGSRA). The Extracellular portion of the chain corresponds to 40 to 330 (SNQPPGGGGG…VPSRQKLTHV (291 aa)). 2 consecutive Kazal-like domains span residues 98–145 (ACQF…PCYS) and 189–237 (VCNI…HCTD). 9 disulfides stabilise this stretch: Cys99–Cys129, Cys103–Cys122, Cys111–Cys143, Cys190–Cys221, Cys194–Cys214, Cys203–Cys235, Cys275–Cys288, Cys283–Cys299, and Cys301–Cys310. An EGF-like domain is found at 271–311 (NHMPCPENLNGYCIHGKCEFIYSTQKASCRCESGYTGQHCE). The helical transmembrane segment at 331 to 351 (LIAAIIGAVQIAIIVAIVMCI) threads the bilayer. Residues 352–380 (TRKCPKNNRGRRQKQNLGHFTSDTSSRMV) lie on the Cytoplasmic side of the membrane. The interval 359–380 (NRGRRQKQNLGHFTSDTSSRMV) is disordered. A compositionally biased stretch (polar residues) spans 366–380 (QNLGHFTSDTSSRMV).

Belongs to the tomoregulin family. As to quaternary structure, may interact with ST14. Expressed predominantly in brain, and at lower levels in heart, placenta and skeletal muscle. Down-regulated in brain tumors as compared to control brain tissues.

It localises to the cell membrane. In terms of biological role, neuron-specific restriction factor that prevents herpes simplex virus 1 (HHV-1) infection in the brain by blocking viral entry. Also able to restrict herpes simplex virus 2 (HHV-2) infection, although to a lesser extent. Acts by preventing the association between the viral glycoprotein D (gD) and its cell surface receptor NECTIN1, thereby inhibiting fusion of the virus and the cell membrane. Also able to prevent the association between the viral glycoprotein B (gB) and MYH9/NMMHC-IIA and MYH10/NMMHC-IIB receptors. May be a tumor suppressor in brain cancers. The chain is Tomoregulin-1 from Homo sapiens (Human).